The chain runs to 382 residues: 1-deoxy-D-xylulose 5-phosphate reductoisomerase (382 aa).

6 residues coordinate NADPH: Thr-10, Gly-11, Ser-12, Ile-13, Gly-36, and Asn-122. Residue Lys-123 participates in 1-deoxy-D-xylulose 5-phosphate binding. Residue Glu-124 coordinates NADPH. Mn(2+) is bound at residue Asp-148. Ser-149, Glu-150, Ser-174, and His-197 together coordinate 1-deoxy-D-xylulose 5-phosphate. Glu-150 contributes to the Mn(2+) binding site. Residue Gly-203 coordinates NADPH. 1-deoxy-D-xylulose 5-phosphate contacts are provided by Ser-210, Asn-215, Lys-216, and Glu-219. Glu-219 contributes to the Mn(2+) binding site.

Belongs to the DXR family. Mg(2+) is required as a cofactor. Mn(2+) serves as cofactor.

The catalysed reaction is 2-C-methyl-D-erythritol 4-phosphate + NADP(+) = 1-deoxy-D-xylulose 5-phosphate + NADPH + H(+). The protein operates within isoprenoid biosynthesis; isopentenyl diphosphate biosynthesis via DXP pathway; isopentenyl diphosphate from 1-deoxy-D-xylulose 5-phosphate: step 1/6. Its function is as follows. Catalyzes the NADPH-dependent rearrangement and reduction of 1-deoxy-D-xylulose-5-phosphate (DXP) to 2-C-methyl-D-erythritol 4-phosphate (MEP). The protein is 1-deoxy-D-xylulose 5-phosphate reductoisomerase of Chlorobium phaeobacteroides (strain BS1).